Here is an 888-residue protein sequence, read N- to C-terminus: MDESALLDLLECPVCLERLDASAKVLPCQHTFCKRCLLGIVGSRNELRCPECRTLVGSGVEELPSNILLVRLLDGIKQRPWKPGPGGGSGTNCTNALRSQSSTVANCSSKDLQSSQGGQQPRVQSWSPPVRGIPQLPCAKALYNYEGKEPGDLKFSKGDIIILRRQVDENWYHGEVNGIHGFFPTNFVQIIKPLPQPPPQCKALYDFEVKDKEADKDCLPFAKDDVLTVIRRVDENWAEGMLADKIGIFPISYVEFNSAAKQLIEWDKPPVPGVDAGECSSAAAQSSTAPKHSDTKKNTKKRHSFTSLTMANKSSQASQNRHSMEISPPVLISSSNPTAAARISELSGLSCSAPSQVHISTTGLIVTPPPSSPVTTGPSFTFPSDVPYQAALGTLNPPLPPPPLLAATVLASTPPGATAAAAAAGMGPRPMAGSTDQIAHLRPQTRPSVYVAIYPYTPRKEDELELRKGEMFLVFERCQDGWFKGTSMHTSKIGVFPGNYVAPVTRAVTNASQAKVPMSTAGQTSRGVTMVSPSTAGGPAQKLQGNGVAGSPSVVPAAVVSAAHIQTSPQAKVLLHMTGQMTVNQARNAVRTVAAHNQERPTAAVTPIQVQNAAGLSPASVGLSHHSLASPQPAPLMPGSATHTAAISISRASAPLACAAAAPLTSPSITSASLEAEPSGRIVTVLPGLPTSPDSASSACGNSSATKPDKDSKKEKKGLLKLLSGASTKRKPRVSPPASPTLEVELGSAELPLQGAVGPELPPGGGHGRAGSCPVDGDGPVTTAVAGAALAQDAFHRKASSLDSAVPIAPPPRQACSSLGPVLNESRPVVCERHRVVVSYPPQSEAELELKEGDIVFVHKKREDGWFKGTLQRNGKTGLFPGSFVENI.

The RING-type zinc finger occupies 12–53 (CPVCLERLDASAKVLPCQHTFCKRCLLGIVGSRNELRCPECR). The span at 108 to 127 (SSKDLQSSQGGQQPRVQSWS) shows a compositional bias: polar residues. The tract at residues 108–128 (SSKDLQSSQGGQQPRVQSWSP) is disordered. SH3 domains are found at residues 134–193 (PQLP…IIKP) and 196–259 (QPPP…FNSA). The disordered stretch occupies residues 275-321 (DAGECSSAAAQSSTAPKHSDTKKNTKKRHSFTSLTMANKSSQASQNR). Positions 292–362 (HSDTKKNTKK…APSQVHISTT (71 aa)) are interaction with RAC1. S304 bears the Phosphoserine mark. Residues 305-321 (FTSLTMANKSSQASQNR) are compositionally biased toward polar residues. The tract at residues 440-543 (HLRPQTRPSV…STAGGPAQKL (104 aa)) is interaction with AKT2. Residues 445-506 (TRPSVYVAIY…PGNYVAPVTR (62 aa)) form the SH3 3 domain. Disordered stretches follow at residues 516–548 (VPMS…GNGV), 620–639 (SVGL…LMPG), and 684–741 (TVLP…ASPT). The segment covering 520-535 (TAGQTSRGVTMVSPST) has biased composition (polar residues). At S532 the chain carries Phosphoserine. Polar residues predominate over residues 692–704 (SPDSASSACGNSS). Residues 707–718 (KPDKDSKKEKKG) show a composition bias toward basic and acidic residues. Position 735 is a phosphoserine (S735). The region spanning 829–888 (VVCERHRVVVSYPPQSEAELELKEGDIVFVHKKREDGWFKGTLQRNGKTGLFPGSFVENI) is the SH3 4 domain.

It belongs to the SH3RF family. As to quaternary structure, interacts with RAC1; in a GTP-dependent manner. Interacts with MAP3K10/MLK2 and MAP3K11/MLK3. Interacts with MAPK8IP; this interaction leads to the PJAC complex (POSH-JIP or SH3RF1/MAPK8IP apoptotic complex) with a 1:1 ratio. Interacts with SIAH1. Interacts with HERP1. Probably part of a signaling complex that may contain SH3RF1, MAPK8IP, DLK1, MAP2K4/MKK4, MAP2K7/MKK7, MAPK8/JNK1, MAPK9/JNK2, AKT1 and AKT2. Found in a complex with RAC2, MAP3K7/TAK1, MAP2K7/MKK7, MAPK8IP1/JIP1, MAPK8/JNK1 and MAPK9/JNK2. Found in a complex with RAC1, MAP3K11/MLK3, MAP2K7/MKK7, MAPK8IP1/JIP1 and MAPK8/JNK1. Interacts with SH3RF2. Post-translationally, phosphorylated at Ser-304 by AKT1 and AKT2. When phosphorylated, it has reduced ability to bind Rac. Autoubiquitinated. Ubiquitinated by SH3RF2, leading to proteasome-mediated degradation.

It is found in the cytoplasm. The protein resides in the perinuclear region. Its subcellular location is the cell projection. The protein localises to the lamellipodium. It localises to the golgi apparatus. It is found in the trans-Golgi network. The catalysed reaction is S-ubiquitinyl-[E2 ubiquitin-conjugating enzyme]-L-cysteine + [acceptor protein]-L-lysine = [E2 ubiquitin-conjugating enzyme]-L-cysteine + N(6)-ubiquitinyl-[acceptor protein]-L-lysine.. Its pathway is protein modification; protein ubiquitination. Has E3 ubiquitin-protein ligase activity. In the absence of an external substrate, it can catalyze self-ubiquitination. Stimulates ubiquitination of potassium channel KCNJ1, enhancing it's dynamin-dependent and clathrin-independent endocytosis. Acts as a scaffold protein that coordinates with MAPK8IP1/JIP1 in organizing different components of the JNK pathway, including RAC1 or RAC2, MAP3K11/MLK3 or MAP3K7/TAK1, MAP2K7/MKK7, MAPK8/JNK1 and/or MAPK9/JNK2 into a functional multiprotein complex to ensure the effective activation of the JNK signaling pathway. Regulates the differentiation of CD4(+) and CD8(+) T-cells and promotes T-helper 1 (Th1) cell differentiation. Regulates the activation of MAPK8/JNK1 and MAPK9/JNK2 in CD4(+) T-cells and the activation of MAPK8/JNK1 in CD8(+) T-cells. Plays a crucial role in the migration of neocortical neurons in the developing brain. Controls proper cortical neuronal migration and the formation of proximal cytoplasmic dilation in the leading process (PCDLP) in migratory neocortical neurons by regulating the proper localization of activated RAC1 and F-actin assembly. Its function is as follows. (Microbial infection) Plays an essential role in the targeting of HIV-1 Gag to the plasma membrane, this function is dependent on it's RING domain, and hence it's E3 ligase activity. The sequence is that of E3 ubiquitin-protein ligase SH3RF1 (SH3RF1) from Homo sapiens (Human).